The primary structure comprises 288 residues: MSRDILHRYLFDNADVRGQLVQLEDSFQAMLAAQDYPKALQVLLGELMAATSLLTATIKFSGDISVQLQGDGPVSLAVINGNNELQLRGVARWKGELAKDASLPTLLGKGYMVITLTPDEGERYQGIVSLEHGTLAACLEEYFNQSEQLPTQIHLFATNAQAAGMLLQVLPSKQEQNDDFSHLSVLTQTIKPQELFDLGAEEVLHRLYHEEEVRLFEPMDVSFKCTCSRERSAGALKTLSLVELETILAEEGKIDMGCEYCTASYSFDAIDIAALFSDNADTSQTKTQ.

2 disulfides stabilise this stretch: C225-C227 and C258-C261.

This sequence belongs to the HSP33 family. Post-translationally, under oxidizing conditions two disulfide bonds are formed involving the reactive cysteines. Under reducing conditions zinc is bound to the reactive cysteines and the protein is inactive.

It is found in the cytoplasm. Redox regulated molecular chaperone. Protects both thermally unfolding and oxidatively damaged proteins from irreversible aggregation. Plays an important role in the bacterial defense system toward oxidative stress. The sequence is that of 33 kDa chaperonin from Shewanella denitrificans (strain OS217 / ATCC BAA-1090 / DSM 15013).